We begin with the raw amino-acid sequence, 166 residues long: Protein-export protein SecB (166 aa).

Residues 1–16 (MTDTSAAGNPTPGQQP) show a composition bias toward polar residues. The segment at 1-21 (MTDTSAAGNPTPGQQPANPPS) is disordered.

The protein belongs to the SecB family. As to quaternary structure, homotetramer, a dimer of dimers. One homotetramer interacts with 1 SecA dimer.

It is found in the cytoplasm. Functionally, one of the proteins required for the normal export of preproteins out of the cell cytoplasm. It is a molecular chaperone that binds to a subset of precursor proteins, maintaining them in a translocation-competent state. It also specifically binds to its receptor SecA. This is Protein-export protein SecB from Hyphomonas neptunium (strain ATCC 15444).